The sequence spans 146 residues: ATP synthase epsilon chain 2 (146 aa).

This sequence belongs to the ATPase epsilon chain family. As to quaternary structure, F-type ATPases have 2 components, CF(1) - the catalytic core - and CF(0) - the membrane proton channel. CF(1) has five subunits: alpha(3), beta(3), gamma(1), delta(1), epsilon(1). CF(0) has three main subunits: a, b and c.

Its subcellular location is the cell inner membrane. Produces ATP from ADP in the presence of a proton gradient across the membrane. The protein is ATP synthase epsilon chain 2 of Cereibacter sphaeroides (strain ATCC 17023 / DSM 158 / JCM 6121 / CCUG 31486 / LMG 2827 / NBRC 12203 / NCIMB 8253 / ATH 2.4.1.) (Rhodobacter sphaeroides).